A 377-amino-acid chain; its full sequence is Succinyl-diaminopimelate desuccinylase (377 aa).

H66 is a Zn(2+) binding site. The active site involves D68. D99 contacts Zn(2+). The Proton acceptor role is filled by E133. Residues E134, E162, and H348 each coordinate Zn(2+).

This sequence belongs to the peptidase M20A family. DapE subfamily. In terms of assembly, homodimer. Zn(2+) is required as a cofactor. The cofactor is Co(2+).

The catalysed reaction is N-succinyl-(2S,6S)-2,6-diaminopimelate + H2O = (2S,6S)-2,6-diaminopimelate + succinate. Its pathway is amino-acid biosynthesis; L-lysine biosynthesis via DAP pathway; LL-2,6-diaminopimelate from (S)-tetrahydrodipicolinate (succinylase route): step 3/3. Functionally, catalyzes the hydrolysis of N-succinyl-L,L-diaminopimelic acid (SDAP), forming succinate and LL-2,6-diaminopimelate (DAP), an intermediate involved in the bacterial biosynthesis of lysine and meso-diaminopimelic acid, an essential component of bacterial cell walls. This chain is Succinyl-diaminopimelate desuccinylase, found in Histophilus somni (strain 2336) (Haemophilus somnus).